An 88-amino-acid chain; its full sequence is Small ribosomal subunit protein uS15c (88 aa).

This sequence belongs to the universal ribosomal protein uS15 family. In terms of assembly, part of the 30S ribosomal subunit.

Its subcellular location is the plastid. The protein localises to the chloroplast. The sequence is that of Small ribosomal subunit protein uS15c (rps15) from Lepidium virginicum (Virginia pepperweed).